The sequence spans 88 residues: Small ribosomal subunit protein bS20 (88 aa).

The segment covering 1-16 (MANTHSAKKATRKITR) has biased composition (basic residues). The tract at residues 1–20 (MANTHSAKKATRKITRRTAV) is disordered.

It belongs to the bacterial ribosomal protein bS20 family.

Binds directly to 16S ribosomal RNA. This is Small ribosomal subunit protein bS20 from Nitrobacter hamburgensis (strain DSM 10229 / NCIMB 13809 / X14).